Consider the following 435-residue polypeptide: GTPase Der (435 aa).

2 EngA-type G domains span residues 4–167 and 175–350; these read PVVA…PAEK and ISFS…DNQN. GTP contacts are provided by residues 10 to 17, 57 to 61, 119 to 122, 181 to 188, 228 to 232, and 293 to 296; these read GQPNVGKS, DTGGI, NKAD, GRPNVGKS, DTAGI, and NKWD. The KH-like domain maps to 351–435; that stretch reads QRIQSSVLND…PIKILPRKRK (85 aa).

Belongs to the TRAFAC class TrmE-Era-EngA-EngB-Septin-like GTPase superfamily. EngA (Der) GTPase family. In terms of assembly, associates with the 50S ribosomal subunit.

GTPase that plays an essential role in the late steps of ribosome biogenesis. The chain is GTPase Der from Lactobacillus acidophilus (strain ATCC 700396 / NCK56 / N2 / NCFM).